Consider the following 289-residue polypeptide: tRNA dimethylallyltransferase (289 aa).

9 to 16 (GTTASGKT) provides a ligand contact to ATP. 11–16 (TASGKT) provides a ligand contact to substrate. Residues 34-37 (DSLC) form an interaction with substrate tRNA region.

This sequence belongs to the IPP transferase family. As to quaternary structure, monomer. Requires Mg(2+) as cofactor.

It catalyses the reaction adenosine(37) in tRNA + dimethylallyl diphosphate = N(6)-dimethylallyladenosine(37) in tRNA + diphosphate. Functionally, catalyzes the transfer of a dimethylallyl group onto the adenine at position 37 in tRNAs that read codons beginning with uridine, leading to the formation of N6-(dimethylallyl)adenosine (i(6)A). This chain is tRNA dimethylallyltransferase, found in Campylobacter jejuni (strain RM1221).